Here is a 424-residue protein sequence, read N- to C-terminus: Enolase (424 aa).

Gln-162 is a (2R)-2-phosphoglycerate binding site. Glu-204 functions as the Proton donor in the catalytic mechanism. Asp-241, Glu-284, and Asp-311 together coordinate Mg(2+). The (2R)-2-phosphoglycerate site is built by Lys-336, Arg-365, Ser-366, and Lys-387. Residue Lys-336 is the Proton acceptor of the active site.

The protein belongs to the enolase family. Mg(2+) serves as cofactor.

Its subcellular location is the cytoplasm. The protein localises to the secreted. The protein resides in the cell surface. It catalyses the reaction (2R)-2-phosphoglycerate = phosphoenolpyruvate + H2O. Its pathway is carbohydrate degradation; glycolysis; pyruvate from D-glyceraldehyde 3-phosphate: step 4/5. Its function is as follows. Catalyzes the reversible conversion of 2-phosphoglycerate (2-PG) into phosphoenolpyruvate (PEP). It is essential for the degradation of carbohydrates via glycolysis. The chain is Enolase from Mesorhizobium japonicum (strain LMG 29417 / CECT 9101 / MAFF 303099) (Mesorhizobium loti (strain MAFF 303099)).